The primary structure comprises 259 residues: Heat-labile enterotoxin IIA, A chain (259 aa).

Positions 1–18 are cleaved as a signal peptide; sequence MIKHVLLFFVFISFSVSA. An NAD(+)-binding site is contributed by 23-37; the sequence is RADSRTPDEIRRAGG. Glu-128 is an active-site residue. Cys-203 and Cys-215 are oxidised to a cystine.

It belongs to the enterotoxin A family. Heterohexamer of one A chain and of five B chains.

Its function is as follows. The biological activity of the toxin is produced by the A chain, which activates intracellular adenyl cyclase. This Escherichia coli protein is Heat-labile enterotoxin IIA, A chain.